Consider the following 102-residue polypeptide: RxLR effector protein PexRD41 (102 aa).

An N-terminal signal peptide occupies residues 1–21 (MRSIFYFALAFAALTCSNASA). The short motif at 39–53 (RSLRVAGQEAARGEE) is the RxLR-dEER element.

This sequence belongs to the RxLR effector family. Interacts with host KRBP1.

It is found in the secreted. The protein resides in the host cytoplasm. Its subcellular location is the host nucleus. It localises to the host nucleolus. Effector that enhances P.infestans colonization of host plant leaves. During the early stages of P.infestans infection, interacts with and stabilizes host potato K-homology (KH) RNA-binding protein KRBP1, leading to its accumulation. The sequence is that of RxLR effector protein PexRD41 from Phytophthora infestans (strain T30-4) (Potato late blight agent).